A 326-amino-acid polypeptide reads, in one-letter code: rRNA 2'-O-methyltransferase fibrillarin (326 aa).

Residues 1–84 (MAFQPGSRGG…GGARGGAKGG (84 aa)) are disordered. Residues 7 to 83 (SRGGRGGARG…RGGARGGAKG (77 aa)) are compositionally biased toward gly residues. Asymmetric dimethylarginine is present on residues Arg-8, Arg-11, Arg-15, Arg-19, Arg-23, Arg-26, Arg-32, Arg-36, Arg-39, Arg-45, Arg-49, Arg-55, Arg-59, Arg-63, Arg-67, Arg-71, Arg-74, and Arg-78. Residues 180–181 (TS), 199–200 (EF), 224–225 (DA), and 244–247 (DVAQ) contribute to the S-adenosyl-L-methionine site.

Belongs to the methyltransferase superfamily. Fibrillarin family. In terms of assembly, component of box C/D small nucleolar ribonucleoprotein (snoRNP) particles that contain SNU13, NOP1, SIK1/NOP56 and NOP58, plus a guide RNA. In terms of processing, by homology to other fibrillarins, some or all of the N-terminal domain arginines are modified to asymmetric dimethylarginine (DMA).

Its subcellular location is the nucleus. It localises to the nucleolus. The catalysed reaction is L-glutaminyl-[histone H2A] + S-adenosyl-L-methionine = N(5)-methyl-L-glutaminyl-[histone H2A] + S-adenosyl-L-homocysteine + H(+). In terms of biological role, S-adenosyl-L-methionine-dependent methyltransferase that has the ability to methylate both RNAs and proteins. Involved in pre-rRNA processing. Utilizes the methyl donor S-adenosyl-L-methionine to catalyze the site-specific 2'-hydroxyl methylation of ribose moieties in pre-ribosomal RNA. Site specificity is provided by a guide RNA that base pairs with the substrate. Methylation occurs at a characteristic distance from the sequence involved in base pairing with the guide RNA. Also acts as a protein methyltransferase by mediating methylation of 'Gln-105' of histone H2A (H2AQ105me), a modification that impairs binding of the FACT complex and is specifically present at 35S ribosomal DNA locus. The sequence is that of rRNA 2'-O-methyltransferase fibrillarin (NOP1) from Eremothecium gossypii (strain ATCC 10895 / CBS 109.51 / FGSC 9923 / NRRL Y-1056) (Yeast).